Here is a 134-residue protein sequence, read N- to C-terminus: Small ribosomal subunit protein uS9 (134 aa).

The segment covering Ser-98–Lys-114 has biased composition (basic and acidic residues). The segment at Ser-98–Arg-134 is disordered. Basic residues predominate over residues Lys-115–Arg-134.

The protein belongs to the universal ribosomal protein uS9 family.

This is Small ribosomal subunit protein uS9 from Chlamydia caviae (strain ATCC VR-813 / DSM 19441 / 03DC25 / GPIC) (Chlamydophila caviae).